A 344-amino-acid chain; its full sequence is Putative NAD(P)H nitroreductase MT3217 (344 aa).

Residues 40-44 (QPWRW) and Arg326 each bind FMN.

Belongs to the nitroreductase family. In terms of assembly, interacts with human TLR2. FMN serves as cofactor.

Stimulates pro-inflammatory cytokine expression via TLR2 signaling pathway. Activation of TLR2 results in the phosphorylation and activation of NF-kappa-B. Also induces TLR2 expression. May influence the innate immune responses to facilitate the survival of M.tuberculosis in the granulomatous microenvironment. This Mycobacterium tuberculosis (strain CDC 1551 / Oshkosh) protein is Putative NAD(P)H nitroreductase MT3217.